A 306-amino-acid chain; its full sequence is MTNEFLHFEKISRQTWQSLHRKTTPPLTEEELESIKSFNDQISLQDVTDIYLPLAHLIQIYKRTKEDLAFSKGIFLQRESKSQPFIIGVSGSVAVGKSTTSRLLQILLSRTVTDATVELVTTDGFLYPNQTLIEQGILNRKGFPESYDMEALLNFLDRIKNGQDVDIPVYSHEVYDIVPEKKQSVKAADFVIVEGINVFQNPQNDRLYITDFFDFSIYVDAGVDDIESWYLDRFLKMLSLAQNDPDSYYYRFTQMPIGEVESFAHQVWISINLTNLQNYIEPTRNRAEVILHKSKNHEIDEIYLKK.

Position 91-98 (91-98 (GSVAVGKS)) interacts with ATP.

The protein belongs to the prokaryotic pantothenate kinase family.

Its subcellular location is the cytoplasm. The enzyme catalyses (R)-pantothenate + ATP = (R)-4'-phosphopantothenate + ADP + H(+). It functions in the pathway cofactor biosynthesis; coenzyme A biosynthesis; CoA from (R)-pantothenate: step 1/5. The protein is Pantothenate kinase of Streptococcus pneumoniae serotype 19F (strain G54).